The following is a 154-amino-acid chain: Myoglobin (154 aa).

Positions 2-148 (GLSDGEWQLV…FRNDIAAKYK (147 aa)) constitute a Globin domain. S4 carries the post-translational modification Phosphoserine. Position 65 (H65) interacts with nitrite. Residue H65 coordinates O2. T68 carries the post-translational modification Phosphothreonine. A heme b-binding site is contributed by H94.

Belongs to the globin family. In terms of assembly, monomeric.

It localises to the cytoplasm. It is found in the sarcoplasm. The catalysed reaction is Fe(III)-heme b-[protein] + nitric oxide + H2O = Fe(II)-heme b-[protein] + nitrite + 2 H(+). It catalyses the reaction H2O2 + AH2 = A + 2 H2O. Functionally, monomeric heme protein which primary function is to store oxygen and facilitate its diffusion within muscle tissues. Reversibly binds oxygen through a pentacoordinated heme iron and enables its timely and efficient release as needed during periods of heightened demand. Depending on the oxidative conditions of tissues and cells, and in addition to its ability to bind oxygen, it also has a nitrite reductase activity whereby it regulates the production of bioactive nitric oxide. Under stress conditions, like hypoxia and anoxia, it also protects cells against reactive oxygen species thanks to its pseudoperoxidase activity. This is Myoglobin (MB) from Lutra lutra (European river otter).